The sequence spans 327 residues: Serpentine receptor class alpha-33 (327 aa).

6 helical membrane passes run 20–40, 56–76, 133–153, 186–206, 227–247, and 270–290; these read FSVYFIDTSCIISMAVTVLAI, LLITDLVFINIHNLSYIFLQN, FSHANYGFLLAILSLIASTVF, IIPYLAICLTSIVCSLLLIIY, AVVSSISVAILGIIQLVLFCF, and IIGWFYTSPLNAIISPTAVFL.

This sequence belongs to the nematode receptor-like protein sra family.

The protein resides in the membrane. The chain is Serpentine receptor class alpha-33 (sra-33) from Caenorhabditis elegans.